The following is a 518-amino-acid chain: Dihydropyrimidinase 2 (518 aa).

Zn(2+) is bound by residues His-59, His-61, and Lys-152. N6-carboxylysine is present on Lys-152. Tyr-157 contributes to the substrate binding site. Positions 185 and 241 each coordinate Zn(2+). Substrate is bound at residue Ser-291. Asp-319 is a Zn(2+) binding site. Asn-340 is a substrate binding site.

This sequence belongs to the metallo-dependent hydrolases superfamily. Hydantoinase/dihydropyrimidinase family. Homotetramer. Zn(2+) is required as a cofactor. Post-translationally, carboxylation allows a single lysine to coordinate two zinc ions.

It carries out the reaction 5,6-dihydrouracil + H2O = 3-(carbamoylamino)propanoate + H(+). The sequence is that of Dihydropyrimidinase 2 (dhp-2) from Caenorhabditis briggsae.